A 757-amino-acid polypeptide reads, in one-letter code: Chloride anion exchanger (757 aa).

Topologically, residues 1–71 are cytoplasmic; that stretch reads MIEAIGNQYV…SWLPAYKIKE (71 aa). Residues 72 to 92 form a helical membrane-spanning segment; that stretch reads WLLSDIVSGISTGLVAVLQGL. A topological domain (extracellular) is located at residue Ala-93. Residues 94 to 114 form a helical membrane-spanning segment; the sequence is FALLVNIPPAYGLYAAFFPVI. The Cytoplasmic segment spans residues 115–124; that stretch reads TYFFLGTSRH. The chain crosses the membrane as a helical span at residues 125–145; the sequence is ISVGPFPVLSMMVGVVVTRVV. The Extracellular portion of the chain corresponds to 146–176; that stretch reads SDPNASSELSSSSTENDSFIEEKVMVAASVT. N-linked (GlcNAc...) asparagine glycans are attached at residues Asn-149 and Asn-161. Residues 177–197 traverse the membrane as a helical segment; the sequence is VLSGIIQLLLGVLQVGFVVIY. The Cytoplasmic segment spans residues 198 to 201; sequence LSES. The helical transmembrane segment at 202-222 threads the bilayer; the sequence is LISGFTTAAAIHVLVSQLKFM. The Extracellular segment spans residues 223–250; sequence LQLPVPAYSDPFSIFKVLESVFTQIQKT. Residues 251-271 form a helical membrane-spanning segment; that stretch reads NIADLVTSVIILVVVFVFKEI. The Cytoplasmic segment spans residues 272 to 278; the sequence is NQRYRSK. A helical membrane pass occupies residues 279-299; that stretch reads LPVPIPIELIMTVIATGVSYG. At 300–335 the chain is on the extracellular side; the sequence is CNFEDRFGVAVVGNMSLGFQPPITPSVEVFQDTIGD. Residues 336–356 traverse the membrane as a helical segment; the sequence is SFGIAIVGFAVAFSVASVYSL. The Cytoplasmic portion of the chain corresponds to 357 to 367; sequence KYDYPIDGNQE. Residues 368-388 traverse the membrane as a helical segment; it reads LIALGVSNIFTGAFKGFAGST. At 389–404 the chain is on the extracellular side; it reads ALSRSGVQESTGGKTQ. The helical transmembrane segment at 405–425 threads the bilayer; sequence VAGLLSAVIVLIVIVAIGFLL. At 426-462 the chain is on the cytoplasmic side; sequence QPLQKSVLAALALGNLKGMLMQFAEIGRLWKKDKYDC. Residues 463 to 483 traverse the membrane as a helical segment; the sequence is LIWIMTFIFAIVLGLGLGLAA. At 484–757 the chain is on the extracellular side; that stretch reads SVAFQLLTIV…ECQVPVETKF (274 aa). Residues 518-713 form the STAS domain; that stretch reads NYAEVYEPEG…LTIHDAILHI (196 aa). Residues 754 to 757 carry the PDZ-binding motif; that stretch reads ETKF.

Belongs to the SLC26A/SulP transporter (TC 2.A.53) family. In terms of assembly, interacts with PDZK1. Interacts with CFTR, SLC26A6 and NHERF1. Interacts (via PDZ-binding motif) with NHERF4 (via the third PDZ domain). This interaction leads to decreased expression of SLC26A3 on the cell membrane resulting in its reduced exchanger activity. Post-translationally, N-glycosylation is required for efficient cell surface expression, and protection from proteolytic degradation. Expressed in spermatogenic cells. Expressed at high levels in cecum and colon and at lower levels in small intestine.

Its subcellular location is the apical cell membrane. It is found in the membrane. The protein resides in the cell membrane. The catalysed reaction is hydrogencarbonate(in) + 2 chloride(out) = hydrogencarbonate(out) + 2 chloride(in). Functionally, mediates chloride-bicarbonate exchange with a chloride bicarbonate stoichiometry of 2:1 in the intestinal epithelia. Plays a role in the chloride and bicarbonate homeostasis during sperm epididymal maturation and capacitation. The polypeptide is Chloride anion exchanger (Slc26a3) (Mus musculus (Mouse)).